A 293-amino-acid polypeptide reads, in one-letter code: Cbb3-type cytochrome c oxidase subunit FixP (293 aa).

Positions M1–P11 are enriched in basic and acidic residues. Residues M1–W25 form a disordered region. Residues F43 to V63 traverse the membrane as a helical segment. Cytochrome c domains are found at residues L114–S201 and P209–G290. Residues C127, C130, H131, M178, C222, C225, H226, and M267 each contribute to the heme c site.

This sequence belongs to the CcoP / FixP family. In terms of assembly, component of the cbb3-type cytochrome c oxidase at least composed of FixN, FixO, FixQ and FixP. Heme c is required as a cofactor.

The protein resides in the cell inner membrane. It participates in energy metabolism; oxidative phosphorylation. Functionally, C-type cytochrome. Part of the cbb3-type cytochrome c oxidase complex. FixP subunit is required for transferring electrons from donor cytochrome c via its heme groups to FixO subunit. From there, electrons are shuttled to the catalytic binuclear center of FixN subunit where oxygen reduction takes place. The complex also functions as a proton pump. The protein is Cbb3-type cytochrome c oxidase subunit FixP of Azorhizobium caulinodans (strain ATCC 43989 / DSM 5975 / JCM 20966 / LMG 6465 / NBRC 14845 / NCIMB 13405 / ORS 571).